Here is a 397-residue protein sequence, read N- to C-terminus: Galactokinase (397 aa).

The tract at residues 1-27 (MGEAVGEPSASGSGSCTGRSRRGCGRR) is disordered. Residues 9 to 18 (SASGSGSCTG) show a composition bias toward low complexity. 36-39 (EHTD) is a substrate binding site. Residues serine 69 and 124–130 (GAGLSSS) contribute to the ATP site. Mg(2+) contacts are provided by serine 130 and glutamate 161. The active-site Proton acceptor is the aspartate 173. Tyrosine 225 is a substrate binding site.

Belongs to the GHMP kinase family. GalK subfamily.

The protein localises to the cytoplasm. It carries out the reaction alpha-D-galactose + ATP = alpha-D-galactose 1-phosphate + ADP + H(+). Its pathway is carbohydrate metabolism; galactose metabolism. Its function is as follows. Catalyzes the transfer of the gamma-phosphate of ATP to D-galactose to form alpha-D-galactose-1-phosphate (Gal-1-P). This is Galactokinase from Streptomyces lividans.